Reading from the N-terminus, the 413-residue chain is NAD-dependent dihydropyrimidine dehydrogenase subunit PreT (413 aa).

Glu-287 is a binding site for NAD(+).

It belongs to the NADH dehydrogenase family. Heterotetramer of 2 PreA and 2 PreT subunits.

It catalyses the reaction 5,6-dihydrouracil + NAD(+) = uracil + NADH + H(+). The catalysed reaction is 5,6-dihydrothymine + NAD(+) = thymine + NADH + H(+). Its function is as follows. Involved in pyrimidine base degradation. Catalyzes physiologically the reduction of uracil to 5,6-dihydrouracil (DHU) by using NADH as a specific cosubstrate. It also catalyzes the reverse reaction and the reduction of thymine to 5,6-dihydrothymine (DHT). This Salmonella typhimurium (strain LT2 / SGSC1412 / ATCC 700720) protein is NAD-dependent dihydropyrimidine dehydrogenase subunit PreT (preT).